The chain runs to 409 residues: Tyrosine--tRNA ligase (409 aa).

A 'HIGH' region motif is present at residues 54 to 63; that stretch reads PTAPDIHLGH. Positions 238 to 242 match the 'KMSKS' region motif; the sequence is KMSKS. An ATP-binding site is contributed by K241. The region spanning 347-407 is the S4 RNA-binding domain; it reads QGILRILREA…GKRKFARVKL (61 aa).

Belongs to the class-I aminoacyl-tRNA synthetase family. TyrS type 2 subfamily. Homodimer.

The protein localises to the cytoplasm. The enzyme catalyses tRNA(Tyr) + L-tyrosine + ATP = L-tyrosyl-tRNA(Tyr) + AMP + diphosphate + H(+). Its function is as follows. Catalyzes the attachment of tyrosine to tRNA(Tyr) in a two-step reaction: tyrosine is first activated by ATP to form Tyr-AMP and then transferred to the acceptor end of tRNA(Tyr). In Bordetella parapertussis (strain 12822 / ATCC BAA-587 / NCTC 13253), this protein is Tyrosine--tRNA ligase.